The sequence spans 289 residues: MAKLISYAKGGFLRNTRLTSRAVPQVYQHATSSRGFVHLTSSVAQSSAIHVSTPSTPSLMLIMGKRTMFIQTQDTPNPESLKFLPGVEVLGKGNTYDFPSVAAAHCSPLAKLLFRVEGVRSVFFGSDFITISKEEAAEWGLIKPEVFAVIMDFFASGLPILHEARNNADTEILEDDDETVMMIKELLDTRIRPTVQEDGGDIVFMSYDNGVVKLKMQGSCSSCPSSIVTLKNGVQNMLQFYIPEVESVEQVFDEADKMADKEFERFERNLKQKDTSSTAPVGIGGGPAN.

Residues 1–56 constitute a mitochondrion transit peptide; it reads MAKLISYAKGGFLRNTRLTSRAVPQVYQHATSSRGFVHLTSSVAQSSAIHVSTPST. The tract at residues 183 to 251 is nifU; sequence IKELLDTRIR…IPEVESVEQV (69 aa). Residues Cys-220 and Cys-223 each coordinate [4Fe-4S] cluster. The tract at residues 267 to 289 is disordered; sequence ERNLKQKDTSSTAPVGIGGGPAN.

The protein belongs to the NifU family.

The protein localises to the mitochondrion. In terms of biological role, molecular scaffold for [Fe-S] cluster assembly of mitochondrial iron-sulfur proteins. The protein is NFU1 iron-sulfur cluster scaffold homolog, mitochondrial of Drosophila willistoni (Fruit fly).